The sequence spans 379 residues: Cell division protein FtsZ (379 aa).

GTP-binding positions include 18–22 (GGGVN), 105–107 (GTG), Glu136, Arg140, and Asp184.

It belongs to the FtsZ family. In terms of assembly, homodimer. Polymerizes to form a dynamic ring structure in a strictly GTP-dependent manner. Interacts directly with several other division proteins.

The protein localises to the cytoplasm. In terms of biological role, essential cell division protein that forms a contractile ring structure (Z ring) at the future cell division site. The regulation of the ring assembly controls the timing and the location of cell division. One of the functions of the FtsZ ring is to recruit other cell division proteins to the septum to produce a new cell wall between the dividing cells. Binds GTP and shows GTPase activity. This is Cell division protein FtsZ from Mycobacterium bovis (strain ATCC BAA-935 / AF2122/97).